A 222-amino-acid polypeptide reads, in one-letter code: Cytidylate kinase 2 (222 aa).

Residue 7-15 (GPSGAGKGT) participates in ATP binding.

It belongs to the cytidylate kinase family. Type 1 subfamily.

It localises to the cytoplasm. It carries out the reaction CMP + ATP = CDP + ADP. The catalysed reaction is dCMP + ATP = dCDP + ADP. This Haemophilus influenzae (strain ATCC 51907 / DSM 11121 / KW20 / Rd) protein is Cytidylate kinase 2.